A 250-amino-acid polypeptide reads, in one-letter code: PF03932 family protein CutC (250 aa).

This sequence belongs to the CutC family.

The protein resides in the cytoplasm. The sequence is that of PF03932 family protein CutC from Vibrio vulnificus (strain CMCP6).